The chain runs to 338 residues: Probable beta-1,4-xylosyltransferase IRX9 (338 aa).

The disordered stretch occupies residues 1–21 (MASAGGCKKKTGNSRSRSPRS). The Cytoplasmic portion of the chain corresponds to 1–27 (MASAGGCKKKTGNSRSRSPRSPVVLRR). A helical; Signal-anchor for type II membrane protein transmembrane segment spans residues 28–46 (AMLHSSLCFLVGLLAGLAA). Over 47–338 (PSDWPAAAGA…IMLWRIQTTL (292 aa)) the chain is Lumenal. N232 and N314 each carry an N-linked (GlcNAc...) asparagine glycan.

Belongs to the glycosyltransferase 43 family.

It localises to the golgi apparatus membrane. Functionally, probable beta-1,4-xylosyltransferase involved in xylan biosynthesis in cell walls. This chain is Probable beta-1,4-xylosyltransferase IRX9, found in Oryza sativa subsp. japonica (Rice).